The chain runs to 680 residues: Forkhead box protein P4 (680 aa).

The span at 1–17 (MMVESASETIRSAPSGQ) shows a compositional bias: polar residues. Residues 1–56 (MMVESASETIRSAPSGQNGVGSLSGQADGSSGGATGTTASGTGREVTTGADSNGEM) are disordered. 2 positions are modified to phosphoserine: Ser52 and Ser86. Residues Lys175 and Lys246 each participate in a glycyl lysine isopeptide (Lys-Gly) (interchain with G-Cter in SUMO2) cross-link. Residues 262–306 (FAAPPKVSPPLSHHTLPNGQPTVLTSRRDSSSHEETPGSHPLYGH) form a disordered region. Polar residues predominate over residues 276 to 286 (TLPNGQPTVLT). Residues 287 to 298 (SRRDSSSHEETP) are compositionally biased toward basic and acidic residues. The C2H2-type zinc-finger motif lies at 307 to 332 (GECKWPGCETLCEDLGQFIKHLNTEH). Residues 349–370 (VQQLEIQLAKESERLQAMMAHL) are leucine-zipper. Lys378 participates in a covalent cross-link: Glycyl lysine isopeptide (Lys-Gly) (interchain with G-Cter in SUMO2). A disordered region spans residues 407 to 445 (GLVHPPTSAAAPVTPLRPPGLGSASLHGGGPARRRSSDK). The segment at residues 467-559 (RPPFTYASLI…KMTGSPTLVK (93 aa)) is a DNA-binding region (fork-head). Ser554 carries the post-translational modification Phosphoserine. A disordered region spans residues 602–680 (PLSHDDVGAP…EEELPGEELS (79 aa)). A compositionally biased stretch (polar residues) spans 617-635 (SNGSSSPPRLSPPQYSHQV). The span at 668–680 (RDLEEELPGEELS) shows a compositional bias: acidic residues.

As to quaternary structure, forms homodimers and heterodimers with FOXP1 and FOXP2. Dimerization is required for DNA-binding.

It localises to the nucleus. Its function is as follows. Transcriptional repressor that represses lung-specific expression. In Homo sapiens (Human), this protein is Forkhead box protein P4 (FOXP4).